The chain runs to 345 residues: Anthranilate phosphoribosyltransferase (345 aa).

5-phospho-alpha-D-ribose 1-diphosphate is bound by residues Gly-84, 87 to 88 (GD), Thr-92, 94 to 97 (NIST), 112 to 120 (KHGGRSVSS), and Ser-124. Anthranilate is bound at residue Gly-84. Mg(2+) is bound at residue Ser-96. Position 170 (Arg-170) interacts with anthranilate. Mg(2+) is bound by residues Asp-229 and Glu-230.

This sequence belongs to the anthranilate phosphoribosyltransferase family. In terms of assembly, homodimer. The cofactor is Mg(2+).

The enzyme catalyses N-(5-phospho-beta-D-ribosyl)anthranilate + diphosphate = 5-phospho-alpha-D-ribose 1-diphosphate + anthranilate. It participates in amino-acid biosynthesis; L-tryptophan biosynthesis; L-tryptophan from chorismate: step 2/5. Catalyzes the transfer of the phosphoribosyl group of 5-phosphorylribose-1-pyrophosphate (PRPP) to anthranilate to yield N-(5'-phosphoribosyl)-anthranilate (PRA). The sequence is that of Anthranilate phosphoribosyltransferase from Herminiimonas arsenicoxydans.